Reading from the N-terminus, the 167-residue chain is Endothelin-3 (167 aa).

Positions 1–19 are cleaved as a signal peptide; that stretch reads MELGLWLLLGLTVTSAAAA. A propeptide spanning residues 20-50 is cleaved from the precursor; the sequence is LPAQPGNAGQERGPGRSGDQEEKRVPAHHRP. The disordered stretch occupies residues 22 to 45; the sequence is AQPGNAGQERGPGRSGDQEEKRVP. 2 disulfide bridges follow: cysteine 53-cysteine 67 and cysteine 55-cysteine 63. Positions 74–167 are excised as a propeptide; sequence INTPEQTVPY…KSRTDKVHQP (94 aa). A disordered region spans residues 85 to 112; sequence LSNHRGSLRGKRSSGPVPESSQSSPQTR. A compositionally biased stretch (low complexity) spans 97 to 109; sequence SSGPVPESSQSSP. The interval 115–135 is endothelin-like; that stretch reads CACSGVDDKACAYFCAHVTSY. Residues 140–149 are compositionally biased toward basic and acidic residues; it reads EKAAAEEKQE. A disordered region spans residues 140–167; it reads EKAAAEEKQETGGPRQRLKSRTDKVHQP.

The protein belongs to the endothelin/sarafotoxin family.

It localises to the secreted. Its function is as follows. Endothelins are endothelium-derived vasoconstrictor peptides. This is Endothelin-3 (Edn3) from Rattus norvegicus (Rat).